The chain runs to 423 residues: GTPase Obg (423 aa).

One can recognise an Obg domain in the interval 1 to 158 (MFYDEAKIYV…RWLVLELKLL (158 aa)). The OBG-type G domain occupies 159 to 328 (ADVGLIGLPN…LLYHVSGLLA (170 aa)). GTP-binding positions include 165 to 172 (GLPNAGKS), 190 to 194 (FTTLT), 212 to 215 (DIPG), 281 to 284 (NKMD), and 309 to 311 (SAA). Mg(2+) is bound by residues Ser172 and Thr192. Positions 336 to 421 (VTAPEEEKVT…IGKFEFEYVE (86 aa)) constitute an OCT domain.

The protein belongs to the TRAFAC class OBG-HflX-like GTPase superfamily. OBG GTPase family. As to quaternary structure, monomer. Mg(2+) is required as a cofactor.

It localises to the cytoplasm. Functionally, an essential GTPase which binds GTP, GDP and possibly (p)ppGpp with moderate affinity, with high nucleotide exchange rates and a fairly low GTP hydrolysis rate. Plays a role in control of the cell cycle, stress response, ribosome biogenesis and in those bacteria that undergo differentiation, in morphogenesis control. The polypeptide is GTPase Obg (Moorella thermoacetica (strain ATCC 39073 / JCM 9320)).